Consider the following 127-residue polypeptide: Fluoride-specific ion channel FluC (127 aa).

A run of 4 helical transmembrane segments spans residues 4–24, 36–56, 68–88, and 99–119; these read SILA…FLGL, GTLL…AYFA, LIIT…AEVV, and AAGA…LGLF. Residues G75 and T78 each coordinate Na(+).

It belongs to the fluoride channel Fluc/FEX (TC 1.A.43) family.

The protein resides in the cell inner membrane. It catalyses the reaction fluoride(in) = fluoride(out). With respect to regulation, na(+) is not transported, but it plays an essential structural role and its presence is essential for fluoride channel function. Its function is as follows. Fluoride-specific ion channel. Important for reducing fluoride concentration in the cell, thus reducing its toxicity. The polypeptide is Fluoride-specific ion channel FluC (Pseudomonas aeruginosa (strain UCBPP-PA14)).